The chain runs to 81 residues: Sec-independent protein translocase protein TatA (81 aa).

The helical transmembrane segment at 1–21 threads the bilayer; that stretch reads MGGISIWQLLIVALIVILLFG. Residues 34–81 form a disordered region; that stretch reads GAVKGFKNAMTPEDENKSLDDKEKDQTAATSQQAAEKQPETESKDKQA. Basic and acidic residues-rich tracts occupy residues 47–59 and 70–81; these read DENK…EKDQ and KQPETESKDKQA.

This sequence belongs to the TatA/E family. As to quaternary structure, the Tat system comprises two distinct complexes: a TatABC complex, containing multiple copies of TatA, TatB and TatC subunits, and a separate TatA complex, containing only TatA subunits. Substrates initially bind to the TatABC complex, which probably triggers association of the separate TatA complex to form the active translocon.

Its subcellular location is the cell inner membrane. Part of the twin-arginine translocation (Tat) system that transports large folded proteins containing a characteristic twin-arginine motif in their signal peptide across membranes. TatA could form the protein-conducting channel of the Tat system. This is Sec-independent protein translocase protein TatA from Shewanella frigidimarina (strain NCIMB 400).